We begin with the raw amino-acid sequence, 266 residues long: 2-Cys peroxiredoxin BAS1, chloroplastic (266 aa).

The segment covering 1 to 16 has biased composition (low complexity); the sequence is MASVASSTTLISSPSS. Residues 1–25 form a disordered region; the sequence is MASVASSTTLISSPSSRVFPAKSSL. The transit peptide at 1–65 directs the protein to the chloroplast; that stretch reads MASVASSTTL…SSTSRRSFAV (65 aa). The Thioredoxin domain occupies 73-232; sequence PLVGNKAPDF…TMRTLQALQY (160 aa). Residue Cys119 is the Cysteine sulfenic acid (-SOH) intermediate of the active site.

The protein belongs to the peroxiredoxin family. AhpC/Prx1 subfamily. As to quaternary structure, homodimer; disulfide-linked, upon oxidation. Interacts with the plastidial thioredoxin CDSP32. Interacts with the plastidial NADPH-dependent thioredoxin reductase ANTR-C.

The protein localises to the plastid. It is found in the chloroplast. The enzyme catalyses a hydroperoxide + [thioredoxin]-dithiol = an alcohol + [thioredoxin]-disulfide + H2O. Its function is as follows. Thiol-specific peroxidase that catalyzes the reduction of hydrogen peroxide and organic hydroperoxides to water and alcohols, respectively. Plays a role in cell protection against oxidative stress by detoxifying peroxides. May be an antioxidant enzyme particularly in the developing shoot and photosynthesizing leaf. In Arabidopsis thaliana (Mouse-ear cress), this protein is 2-Cys peroxiredoxin BAS1, chloroplastic (BAS1).